We begin with the raw amino-acid sequence, 147 residues long: Sec-independent protein translocase protein TatB (147 aa).

A helical transmembrane segment spans residues 1 to 21 (MFDISFSEILVIAAVALIVIG). Residues 67–88 (EETGRSIENSVHTELDKFRETV) show a composition bias toward basic and acidic residues. The segment at 67 to 147 (EETGRSIENS…GVNRERETAE (81 aa)) is disordered. Low complexity predominate over residues 103–117 (APAGESSPPQNSSPA).

The protein belongs to the TatB family. In terms of assembly, the Tat system comprises two distinct complexes: a TatABC complex, containing multiple copies of TatA, TatB and TatC subunits, and a separate TatA complex, containing only TatA subunits. Substrates initially bind to the TatABC complex, which probably triggers association of the separate TatA complex to form the active translocon.

It localises to the cell inner membrane. Part of the twin-arginine translocation (Tat) system that transports large folded proteins containing a characteristic twin-arginine motif in their signal peptide across membranes. Together with TatC, TatB is part of a receptor directly interacting with Tat signal peptides. TatB may form an oligomeric binding site that transiently accommodates folded Tat precursor proteins before their translocation. The polypeptide is Sec-independent protein translocase protein TatB (Nitrosospira multiformis (strain ATCC 25196 / NCIMB 11849 / C 71)).